The primary structure comprises 303 residues: ADP-ribosyl cyclase/cyclic ADP-ribose hydrolase 1 (303 aa).

Over 1-21 (MANYEFSQVSEDRPGCRLTRK) the chain is Cytoplasmic. The helical; Signal-anchor for type II membrane protein transmembrane segment at 22 to 44 (AQIGLGVGLLLLVALVVVVVIVL) threads the bilayer. The Extracellular segment spans residues 45–303 (WPRSPLVWKG…PEHPSCRLNV (259 aa)). 3 cysteine pairs are disulfide-bonded: cysteine 69–cysteine 85, cysteine 102–cysteine 183, and cysteine 163–cysteine 176. N-linked (GlcNAc...) asparagine glycosylation is present at asparagine 103. Cysteine 122 is a catalytic residue. A glycan (N-linked (GlcNAc...) asparagine) is linked at asparagine 123. Cysteine 204 is a catalytic residue. N-linked (GlcNAc...) asparagine glycosylation is found at asparagine 212 and asparagine 222. Cystine bridges form between cysteine 257-cysteine 278 and cysteine 290-cysteine 299.

This sequence belongs to the ADP-ribosyl cyclase family. In terms of assembly, homodimer. In terms of tissue distribution, spleen, liver, heart, thymus, thyroid gland, ileum, colon, cerebellum, salivary gland, adrenal gland, jejunum, islets of Langerhans and osteoclasts.

The protein localises to the cell membrane. The catalysed reaction is NAD(+) = cyclic ADP-beta-D-ribose + nicotinamide + H(+). It catalyses the reaction nicotinate + NADP(+) = nicotinate-adenine dinucleotide phosphate + nicotinamide. It carries out the reaction NAD(+) + H2O = ADP-D-ribose + nicotinamide + H(+). With respect to regulation, both NAADP and cADPR synthesis are inhibited by nicotinic acid. Its function is as follows. Synthesizes the second messengers cyclic ADP-ribose and nicotinate-adenine dinucleotide phosphate, the former a second messenger for glucose-induced insulin secretion, the latter a Ca(2+) mobilizer. Also has cADPR hydrolase activity. Functionally, regulates osteoclastic bone resorption, probably via production of cyclic ADP-ribose and triggering of a cytosolic calcium ion signal through ryanodine receptor activation. The chain is ADP-ribosyl cyclase/cyclic ADP-ribose hydrolase 1 (Cd38) from Rattus norvegicus (Rat).